The following is a 1083-amino-acid chain: Error-prone DNA polymerase (1083 aa).

The protein belongs to the DNA polymerase type-C family. DnaE2 subfamily.

It is found in the cytoplasm. The catalysed reaction is DNA(n) + a 2'-deoxyribonucleoside 5'-triphosphate = DNA(n+1) + diphosphate. In terms of biological role, DNA polymerase involved in damage-induced mutagenesis and translesion synthesis (TLS). It is not the major replicative DNA polymerase. This chain is Error-prone DNA polymerase, found in Xanthomonas axonopodis pv. citri (strain 306).